An 853-amino-acid chain; its full sequence is DNA mismatch repair protein MutS (853 aa).

Residue 614-621 (GPNMGGKS) participates in ATP binding.

It belongs to the DNA mismatch repair MutS family.

In terms of biological role, this protein is involved in the repair of mismatches in DNA. It is possible that it carries out the mismatch recognition step. This protein has a weak ATPase activity. In Escherichia coli O127:H6 (strain E2348/69 / EPEC), this protein is DNA mismatch repair protein MutS.